The sequence spans 276 residues: Diaminopimelate epimerase (276 aa).

Positions 13, 46, and 66 each coordinate substrate. Catalysis depends on Cys-75, which acts as the Proton donor. Substrate is bound by residues 76 to 77 (GN), Asn-159, Asn-192, and 210 to 211 (ER). Cys-219 (proton acceptor) is an active-site residue. 220 to 221 (GT) provides a ligand contact to substrate.

It belongs to the diaminopimelate epimerase family. In terms of assembly, homodimer.

It localises to the cytoplasm. It catalyses the reaction (2S,6S)-2,6-diaminopimelate = meso-2,6-diaminopimelate. It participates in amino-acid biosynthesis; L-lysine biosynthesis via DAP pathway; DL-2,6-diaminopimelate from LL-2,6-diaminopimelate: step 1/1. Catalyzes the stereoinversion of LL-2,6-diaminopimelate (L,L-DAP) to meso-diaminopimelate (meso-DAP), a precursor of L-lysine and an essential component of the bacterial peptidoglycan. The protein is Diaminopimelate epimerase of Pseudoalteromonas translucida (strain TAC 125).